The following is a 244-amino-acid chain: Phosphoadenosine 5'-phosphosulfate reductase (244 aa).

Catalysis depends on Cys239, which acts as the Nucleophile; cysteine thiosulfonate intermediate.

Belongs to the PAPS reductase family. CysH subfamily.

The protein resides in the cytoplasm. It catalyses the reaction [thioredoxin]-disulfide + sulfite + adenosine 3',5'-bisphosphate + 2 H(+) = [thioredoxin]-dithiol + 3'-phosphoadenylyl sulfate. It participates in sulfur metabolism; hydrogen sulfide biosynthesis; sulfite from sulfate: step 3/3. Catalyzes the formation of sulfite from phosphoadenosine 5'-phosphosulfate (PAPS) using thioredoxin as an electron donor. This Salmonella paratyphi A (strain AKU_12601) protein is Phosphoadenosine 5'-phosphosulfate reductase.